Consider the following 455-residue polypeptide: Xylan O-acetyltransferase 3 (455 aa).

Residues 1-15 (MSKPQQQSPPSTTTT) show a composition bias toward low complexity. Positions 1–32 (MSKPQQQSPPSTTTTSPPPPPPSTPPPASSSR) are disordered. Residues 1–42 (MSKPQQQSPPSTTTTSPPPPPPSTPPPASSSRSLLSALRRSP) lie on the Cytoplasmic side of the membrane. Residues 16-28 (SPPPPPPSTPPPA) show a composition bias toward pro residues. A helical; Signal-anchor for type II membrane protein transmembrane segment spans residues 43-59 (VTTLVAAFFLLALFMYG). Over 60 to 455 (EDVRTLAELS…PSTHPSLPPQ (396 aa)) the chain is Lumenal. N-linked (GlcNAc...) asparagine glycans are attached at residues Asn82, Asn107, and Asn146. Cystine bridges form between Cys96–Cys147, Cys118–Cys183, Cys127–Cys423, and Cys339–Cys419. The GDS motif signature appears at 170 to 172 (GDS). The active-site Nucleophile is Ser172. N-linked (GlcNAc...) asparagine glycosylation is found at Asn278 and Asn348. Asp418 acts as the Proton donor in catalysis. The short motif at 418–421 (DCIH) is the DXXH motif element. His421 functions as the Proton acceptor in the catalytic mechanism.

Belongs to the PC-esterase family. TBL subfamily. In terms of tissue distribution, highly expressed in leaves. Expressed in roots, stems and inflorescences.

It localises to the golgi apparatus membrane. Functionally, xylan acetyltransferase required for 2-O- and 3-O-monoacetylation of xylosyl residues in xylan. Catalyzes the 2-O-acetylation of xylan, followed by nonenzymatic acetyl migration to the O-3 position, resulting in products that are monoacetylated at both O-2 and O-3 positions. The sequence is that of Xylan O-acetyltransferase 3 from Oryza sativa subsp. japonica (Rice).